A 1141-amino-acid chain; its full sequence is IgM protease (1141 aa).

A signal peptide spans 1 to 32 (MNIQERFSLRKSAVGLVSVSLLCAIYTSTVAA). Cys-195 acts as the Nucleophile in catalysis. Disordered regions lie at residues 518-544 (PDLP…STNL), 725-749 (EKDS…NVET), 781-805 (LEKD…TNVE), and 839-860 (EKDS…ESTS). The span at 526–544 (STVSDVDSLSSQETSSTNL) shows a compositional bias: polar residues. 2 stretches are compositionally biased toward low complexity: residues 738 to 749 (EPTSSESTNVET) and 795 to 805 (EPTSSESTNVE). The chain crosses the membrane as a helical span at residues 1119–1136 (IMGVGLLTLVLGSALGLL).

Belongs to the peptidase C66 family.

The protein localises to the cell membrane. It is found in the secreted. IgM cleavage is inhibited by iodoacetamide but not by AEBSF, bestatin, E-64, Z-LVG-CHN(2), or EDTA. In terms of biological role, catalyzes the specific cleavage of porcine IgM bound to the bacterial surface. Can degrade only IgM but neither IgG nor IgA, and is host specific, as it exclusively cleaves porcine IgM but not IgM from six other species, including human, mouse and a closely related member of the Suidae family. Promotes survival in porcine blood. Is thus involved in a so-far-unknown mechanism of host-pathogen interaction at an early stage of the host immune response. The protein is IgM protease (ide) of Streptococcus suis (strain P1/7).